Reading from the N-terminus, the 776-residue chain is DNA topoisomerase 1 (776 aa).

The Toprim domain occupies 1-111 (MKLVIVESPA…VKSDDFFKRV (111 aa)). Residues Glu-7 and Asp-80 each contribute to the Mg(2+) site. One can recognise a Topo IA-type catalytic domain in the interval 132–568 (DTNLVNAQQA…FWSGFNHNIE (437 aa)). An interaction with DNA region spans residues 166-171 (SAGRVQ). The active-site O-(5'-phospho-DNA)-tyrosine intermediate is the Tyr-304. The segment at 600–627 (CPSCNTGELSLKLGKFGAFLACSNYPEC) adopts a C4-type zinc-finger fold.

The protein belongs to the type IA topoisomerase family. As to quaternary structure, monomer. The cofactor is Mg(2+).

The catalysed reaction is ATP-independent breakage of single-stranded DNA, followed by passage and rejoining.. Its function is as follows. Releases the supercoiling and torsional tension of DNA, which is introduced during the DNA replication and transcription, by transiently cleaving and rejoining one strand of the DNA duplex. Introduces a single-strand break via transesterification at a target site in duplex DNA. The scissile phosphodiester is attacked by the catalytic tyrosine of the enzyme, resulting in the formation of a DNA-(5'-phosphotyrosyl)-enzyme intermediate and the expulsion of a 3'-OH DNA strand. The free DNA strand then undergoes passage around the unbroken strand, thus removing DNA supercoils. Finally, in the religation step, the DNA 3'-OH attacks the covalent intermediate to expel the active-site tyrosine and restore the DNA phosphodiester backbone. The protein is DNA topoisomerase 1 of Rickettsia conorii (strain ATCC VR-613 / Malish 7).